We begin with the raw amino-acid sequence, 844 residues long: Rho guanine nucleotide exchange factor 33 (844 aa).

Basic and acidic residues-rich tracts occupy residues 1-13 (MEKTKTKQGENEH) and 101-113 (QQKIEQLQQEKRR). Disordered stretches follow at residues 1 to 20 (MEKTKTKQGENEHMPVNNPS), 101 to 142 (QQKI…GSPF), and 169 to 189 (AQESRSVHVGDSNVKGMMGPG). Residues 54–129 (LEEKVKSCRC…AKKTQKEEHS (76 aa)) are a coiled coil. Over residues 130-142 (SQAGPAQAQGSPF) the composition is skewed to polar residues. The region spanning 265–440 (KRQTVALELL…RVFISHYTLL (176 aa)) is the DH domain. Disordered stretches follow at residues 498–541 (LQPY…DWEL), 668–687 (RPEHPLQPLPKSATSPAGSS), and 702–745 (AKPL…RAAQ). Arginine 757 is subject to Omega-N-methylarginine. The segment covering 787–800 (DTTRFCPKEERESE) has biased composition (basic and acidic residues). Positions 787–844 (DTTRFCPKEERESEQTSFSDQNPRQDQKGGFRSSFRKLFKKKNGNATGEDFCGPWGWW) are disordered. The span at 820 to 829 (SFRKLFKKKN) shows a compositional bias: basic residues.

May act as a guanine-nucleotide releasing factor. This Homo sapiens (Human) protein is Rho guanine nucleotide exchange factor 33 (ARHGEF33).